The sequence spans 211 residues: Protein GrpE (211 aa).

Basic and acidic residues predominate over residues 1–10; the sequence is MTDDTKKPGP. Disordered stretches follow at residues 1-37 and 187-211; these read MTDD…PDPV and AKGG…EKDA. Over residues 27-36 the composition is skewed to acidic residues; the sequence is EQAETAEPDP. Residues 201-211 are compositionally biased toward polar residues; the sequence is PGTSSLNEKDA.

Belongs to the GrpE family. Homodimer.

It is found in the cytoplasm. Its function is as follows. Participates actively in the response to hyperosmotic and heat shock by preventing the aggregation of stress-denatured proteins, in association with DnaK and GrpE. It is the nucleotide exchange factor for DnaK and may function as a thermosensor. Unfolded proteins bind initially to DnaJ; upon interaction with the DnaJ-bound protein, DnaK hydrolyzes its bound ATP, resulting in the formation of a stable complex. GrpE releases ADP from DnaK; ATP binding to DnaK triggers the release of the substrate protein, thus completing the reaction cycle. Several rounds of ATP-dependent interactions between DnaJ, DnaK and GrpE are required for fully efficient folding. This is Protein GrpE from Agrobacterium fabrum (strain C58 / ATCC 33970) (Agrobacterium tumefaciens (strain C58)).